We begin with the raw amino-acid sequence, 175 residues long: Ribosome maturation factor RimM (175 aa).

Positions 96–175 constitute a PRC barrel domain; sequence DGDYYWKDLI…IIKVDWDPEF (80 aa).

The protein belongs to the RimM family. Binds ribosomal protein uS19.

The protein localises to the cytoplasm. Its function is as follows. An accessory protein needed during the final step in the assembly of 30S ribosomal subunit, possibly for assembly of the head region. Essential for efficient processing of 16S rRNA. May be needed both before and after RbfA during the maturation of 16S rRNA. It has affinity for free ribosomal 30S subunits but not for 70S ribosomes. The chain is Ribosome maturation factor RimM from Baumannia cicadellinicola subsp. Homalodisca coagulata.